The sequence spans 393 residues: E3 ubiquitin-protein transferase RMND5B (393 aa).

Met1 bears the N-acetylmethionine mark. One can recognise a LisH domain in the interval Gln116–Val148. The CTLH domain occupies Pro155 to Gln212. Residues Cys338–Cys379 form an RING-Gid-type zinc finger.

In terms of assembly, identified in the CTLH complex that contains GID4, RANBP9 and/or RANBP10, MKLN1, MAEA, RMND5A (or alternatively its paralog RMND5B), GID8, ARMC8, WDR26 and YPEL5. Within this complex, MAEA, RMND5A (or alternatively its paralog RMND5B), GID8, WDR26, and RANBP9 and/or RANBP10 form the catalytic core, while GID4, MKLN1, ARMC8 and YPEL5 have ancillary roles.

It is found in the cytoplasm. The protein localises to the cytosol. The enzyme catalyses S-ubiquitinyl-[E2 ubiquitin-conjugating enzyme]-L-cysteine + [acceptor protein]-L-lysine = [E2 ubiquitin-conjugating enzyme]-L-cysteine + N(6)-ubiquitinyl-[acceptor protein]-L-lysine.. Functionally, core component of the CTLH E3 ubiquitin-protein ligase complex that selectively accepts ubiquitin from UBE2H and mediates ubiquitination and subsequent proteasomal degradation of the transcription factor HBP1. MAEA and RMND5A are both required for catalytic activity of the CTLH E3 ubiquitin-protein ligase complex. Catalytic activity of the complex is required for normal cell proliferation. The CTLH E3 ubiquitin-protein ligase complex is not required for the degradation of enzymes involved in gluconeogenesis, such as FBP1. This is E3 ubiquitin-protein transferase RMND5B (RMND5B) from Homo sapiens (Human).